The primary structure comprises 188 residues: MKINANLIRPGNILEHNGRQYAVLKTQIVQPGKGGAFITVEMRDIRTGNKTNERWRTADTIEKCNVEAKECTFLFKDDSNMTFMDSESFEQFTMPNDTLGDTIGFLQDGMVVEVDFVEGSPVSITLPEKVVMKVVEADPVVKGQTASSSYKPAKLENGMKILVPPFLEEGEVIIVNTTDCSYVERFKG.

The protein belongs to the elongation factor P family.

It localises to the cytoplasm. It participates in protein biosynthesis; polypeptide chain elongation. Functionally, involved in peptide bond synthesis. Stimulates efficient translation and peptide-bond synthesis on native or reconstituted 70S ribosomes in vitro. Probably functions indirectly by altering the affinity of the ribosome for aminoacyl-tRNA, thus increasing their reactivity as acceptors for peptidyl transferase. This Paramagnetospirillum magneticum (strain ATCC 700264 / AMB-1) (Magnetospirillum magneticum) protein is Elongation factor P.